Consider the following 228-residue polypeptide: Adenosylcobinamide-GDP ribazoletransferase (228 aa).

The next 6 helical transmembrane spans lie at 24–44, 50–70, 96–116, 117–137, 159–176, and 181–198; these read VWML…ILYL, NVLS…DGLA, IAGT…LFSA, PFYS…LALA, VFLG…ILLY, and IFAL…KISL.

Belongs to the CobS family. Mg(2+) serves as cofactor.

Its subcellular location is the cell membrane. It carries out the reaction alpha-ribazole + adenosylcob(III)inamide-GDP = adenosylcob(III)alamin + GMP + H(+). It catalyses the reaction alpha-ribazole 5'-phosphate + adenosylcob(III)inamide-GDP = adenosylcob(III)alamin 5'-phosphate + GMP + H(+). Its pathway is cofactor biosynthesis; adenosylcobalamin biosynthesis; adenosylcobalamin from cob(II)yrinate a,c-diamide: step 7/7. Its function is as follows. Joins adenosylcobinamide-GDP and alpha-ribazole to generate adenosylcobalamin (Ado-cobalamin). Also synthesizes adenosylcobalamin 5'-phosphate from adenosylcobinamide-GDP and alpha-ribazole 5'-phosphate. The chain is Adenosylcobinamide-GDP ribazoletransferase from Pyrococcus furiosus (strain ATCC 43587 / DSM 3638 / JCM 8422 / Vc1).